The chain runs to 224 residues: Thiamine-phosphate synthase (224 aa).

4-amino-2-methyl-5-(diphosphooxymethyl)pyrimidine contacts are provided by residues 41–45 and Asp-77; that span reads QFRDK. Mg(2+) contacts are provided by Asp-78 and Asp-97. Ser-116 is a binding site for 4-amino-2-methyl-5-(diphosphooxymethyl)pyrimidine. A 2-[(2R,5Z)-2-carboxy-4-methylthiazol-5(2H)-ylidene]ethyl phosphate-binding site is contributed by 143–145; the sequence is TNS. Lys-146 contributes to the 4-amino-2-methyl-5-(diphosphooxymethyl)pyrimidine binding site. Residues Gly-174 and 194-195 contribute to the 2-[(2R,5Z)-2-carboxy-4-methylthiazol-5(2H)-ylidene]ethyl phosphate site; that span reads IS.

Belongs to the thiamine-phosphate synthase family. Mg(2+) is required as a cofactor.

It catalyses the reaction 2-[(2R,5Z)-2-carboxy-4-methylthiazol-5(2H)-ylidene]ethyl phosphate + 4-amino-2-methyl-5-(diphosphooxymethyl)pyrimidine + 2 H(+) = thiamine phosphate + CO2 + diphosphate. The enzyme catalyses 2-(2-carboxy-4-methylthiazol-5-yl)ethyl phosphate + 4-amino-2-methyl-5-(diphosphooxymethyl)pyrimidine + 2 H(+) = thiamine phosphate + CO2 + diphosphate. It carries out the reaction 4-methyl-5-(2-phosphooxyethyl)-thiazole + 4-amino-2-methyl-5-(diphosphooxymethyl)pyrimidine + H(+) = thiamine phosphate + diphosphate. Its pathway is cofactor biosynthesis; thiamine diphosphate biosynthesis; thiamine phosphate from 4-amino-2-methyl-5-diphosphomethylpyrimidine and 4-methyl-5-(2-phosphoethyl)-thiazole: step 1/1. Functionally, condenses 4-methyl-5-(beta-hydroxyethyl)thiazole monophosphate (THZ-P) and 2-methyl-4-amino-5-hydroxymethyl pyrimidine pyrophosphate (HMP-PP) to form thiamine monophosphate (TMP). This is Thiamine-phosphate synthase from Latilactobacillus sakei subsp. sakei (strain 23K) (Lactobacillus sakei subsp. sakei).